Reading from the N-terminus, the 658-residue chain is Carnitine O-palmitoyltransferase 2, mitochondrial (658 aa).

Residues 1 to 25 constitute a mitochondrion transit peptide; sequence MVPRLLLRAWPRGPAVGPGAPSRPL. At 26–178 the chain is on the mitochondrial matrix side; sequence SAGSGPGQYL…GLLEPEVFHL (153 aa). At lysine 69 the chain carries N6-succinyllysine. Lysine 79 carries the N6-acetyllysine modification. The residue at position 85 (lysine 85) is an N6-succinyllysine. Positions 179-208 form an intramembrane region, note=Mitochondrial inner membrane; the sequence is NPAKSDTITFKRLIRFVPSSLSWYGAYLVN. Residues 209 to 658 are Mitochondrial matrix-facing; the sequence is AYPLDMSQYF…DALEGKSIKS (450 aa). The residue at position 239 (lysine 239) is an N6-acetyllysine; alternate. Lysine 239 carries the N6-succinyllysine; alternate modification. The residue at position 305 (lysine 305) is an N6-acetyllysine. Histidine 372 (proton acceptor) is an active-site residue. Residues lysine 424 and lysine 439 each carry the N6-succinyllysine modification. 452–464 serves as a coordination point for CoA; the sequence is GKEFLKKQKLSPD. Positions 486, 488, and 499 each coordinate (R)-carnitine. An N6-acetyllysine; alternate mark is found at lysine 510 and lysine 544. N6-succinyllysine; alternate occurs at positions 510 and 544.

Belongs to the carnitine/choline acetyltransferase family.

Its subcellular location is the mitochondrion inner membrane. It carries out the reaction (R)-carnitine + hexadecanoyl-CoA = O-hexadecanoyl-(R)-carnitine + CoA. It catalyses the reaction octanoyl-CoA + (R)-carnitine = O-octanoyl-(R)-carnitine + CoA. The catalysed reaction is decanoyl-CoA + (R)-carnitine = O-decanoyl-(R)-carnitine + CoA. The enzyme catalyses dodecanoyl-CoA + (R)-carnitine = O-dodecanoyl-R-carnitine + CoA. It carries out the reaction tetradecanoyl-CoA + (R)-carnitine = O-tetradecanoyl-(R)-carnitine + CoA. It catalyses the reaction (R)-carnitine + octadecanoyl-CoA = O-octadecanoyl-(R)-carnitine + CoA. The catalysed reaction is eicosanoyl-CoA + (R)-carnitine = O-eicosanoyl-(R)-carnitine + CoA. The enzyme catalyses (9Z)-tetradecenoyl-CoA + (R)-carnitine = O-(9Z)-tetradecenoyl-(R)-carnitine + CoA. It carries out the reaction (5Z)-tetradecenoyl-CoA + (R)-carnitine = O-(5Z)-tetradecenoyl-(R)-carnitine + CoA. It catalyses the reaction (R)-carnitine + (9Z)-octadecenoyl-CoA = O-(9Z)-octadecenoyl-(R)-carnitine + CoA. The catalysed reaction is 4,8-dimethylnonanoyl-CoA + (R)-carnitine = O-4,8-dimethylnonanoyl-(R)-carnitine + CoA. It functions in the pathway lipid metabolism; fatty acid beta-oxidation. Inhibited by trans-2-hexadecanoyl-CoA. In terms of biological role, involved in the intramitochondrial synthesis of acylcarnitines from accumulated acyl-CoA metabolites. Reconverts acylcarnitines back into the respective acyl-CoA esters that can then undergo beta-oxidation, an essential step for the mitochondrial uptake of long-chain fatty acids and their subsequent beta-oxidation in the mitochondrion. Active with medium (C8-C12) and long-chain (C14-C18) acyl-CoA esters. The sequence is that of Carnitine O-palmitoyltransferase 2, mitochondrial from Homo sapiens (Human).